The primary structure comprises 407 residues: Arginine deiminase (407 aa).

The active-site Amidino-cysteine intermediate is cysteine 397.

This sequence belongs to the arginine deiminase family.

The protein resides in the cytoplasm. The enzyme catalyses L-arginine + H2O = L-citrulline + NH4(+). Its pathway is amino-acid degradation; L-arginine degradation via ADI pathway; carbamoyl phosphate from L-arginine: step 1/2. This chain is Arginine deiminase, found in Listeria welshimeri serovar 6b (strain ATCC 35897 / DSM 20650 / CCUG 15529 / CIP 8149 / NCTC 11857 / SLCC 5334 / V8).